The sequence spans 439 residues: GTPase Der (439 aa).

EngA-type G domains are found at residues 2-167 (PTVL…ESKG) and 182-358 (IRVS…KSLH). GTP contacts are provided by residues 8 to 15 (GKSNVGKS), 55 to 59 (DTGGI), 118 to 121 (NKSE), 188 to 195 (GRPNAGKS), 235 to 239 (DTAGL), and 301 to 304 (NKID). The KH-like domain maps to 359–439 (YRVQTSAVNS…PIFLKFKSRH (81 aa)).

Belongs to the TRAFAC class TrmE-Era-EngA-EngB-Septin-like GTPase superfamily. EngA (Der) GTPase family. As to quaternary structure, associates with the 50S ribosomal subunit.

Its function is as follows. GTPase that plays an essential role in the late steps of ribosome biogenesis. This is GTPase Der from Thermosipho africanus (strain TCF52B).